Consider the following 497-residue polypeptide: Carboxylesterase (497 aa).

Ser185 functions as the Acyl-ester intermediate in the catalytic mechanism. Catalysis depends on charge relay system residues Glu319 and His415.

Belongs to the type-B carboxylesterase/lipase family.

The protein resides in the secreted. It catalyses the reaction a carboxylic ester + H2O = an alcohol + a carboxylate + H(+). This Thermobifida fusca (Thermomonospora fusca) protein is Carboxylesterase.